Consider the following 275-residue polypeptide: Proteasome subunit beta (275 aa).

The propeptide at 1–52 (MQDTTANQVAANATSSFTEHLQRNRPGLLPYNQPFPAALTGAGSQPLQVPHA) is removed in mature form; by autocatalysis. Thr-53 acts as the Nucleophile in catalysis.

Belongs to the peptidase T1B family. As to quaternary structure, the 20S proteasome core is composed of 14 alpha and 14 beta subunits that assemble into four stacked heptameric rings, resulting in a barrel-shaped structure. The two inner rings, each composed of seven catalytic beta subunits, are sandwiched by two outer rings, each composed of seven alpha subunits. The catalytic chamber with the active sites is on the inside of the barrel. Has a gated structure, the ends of the cylinder being occluded by the N-termini of the alpha-subunits. Is capped by the proteasome-associated ATPase, ARC.

It localises to the cytoplasm. It carries out the reaction Cleavage of peptide bonds with very broad specificity.. It functions in the pathway protein degradation; proteasomal Pup-dependent pathway. Its activity is regulated as follows. The formation of the proteasomal ATPase ARC-20S proteasome complex, likely via the docking of the C-termini of ARC into the intersubunit pockets in the alpha-rings, may trigger opening of the gate for substrate entry. Interconversion between the open-gate and close-gate conformations leads to a dynamic regulation of the 20S proteasome proteolysis activity. In terms of biological role, component of the proteasome core, a large protease complex with broad specificity involved in protein degradation. The chain is Proteasome subunit beta from Arthrobacter sp. (strain FB24).